A 546-amino-acid polypeptide reads, in one-letter code: Thermolysin (546 aa).

An N-terminal signal peptide occupies residues 1–25 (MDKRAMLGAIGLAFGLMAWPFGASA). Positions 26–228 (KEKSMVWNEQ…EAKPGGGQPV (203 aa)) are cleaved as a propeptide — activation peptide. Residues Asp-287, Asp-289, Gln-291, and Asp-368 each coordinate Ca(2+). Position 372 (His-372) interacts with Zn(2+). Glu-373 is an active-site residue. Residues His-376 and Glu-396 each contribute to the Zn(2+) site. Asn-413, Asp-415, Glu-417, Glu-420, Tyr-423, Thr-424, Ile-427, and Asp-430 together coordinate Ca(2+). His-461 serves as the catalytic Proton donor.

It belongs to the peptidase M4 family. The cofactor is Ca(2+). Zn(2+) serves as cofactor.

Its subcellular location is the secreted. It carries out the reaction Preferential cleavage: Xaa-|-Leu &gt; Xaa-|-Phe.. Extracellular zinc metalloprotease. Has collagenase activity. This Bacillus sp. (strain EA1) protein is Thermolysin (npr).